A 282-amino-acid chain; its full sequence is ATP phosphoribosyltransferase (282 aa).

It belongs to the ATP phosphoribosyltransferase family. Long subfamily. Mg(2+) serves as cofactor.

The protein resides in the cytoplasm. The catalysed reaction is 1-(5-phospho-beta-D-ribosyl)-ATP + diphosphate = 5-phospho-alpha-D-ribose 1-diphosphate + ATP. It participates in amino-acid biosynthesis; L-histidine biosynthesis; L-histidine from 5-phospho-alpha-D-ribose 1-diphosphate: step 1/9. Feedback inhibited by histidine. Catalyzes the condensation of ATP and 5-phosphoribose 1-diphosphate to form N'-(5'-phosphoribosyl)-ATP (PR-ATP). Has a crucial role in the pathway because the rate of histidine biosynthesis seems to be controlled primarily by regulation of HisG enzymatic activity. This Pyrobaculum islandicum (strain DSM 4184 / JCM 9189 / GEO3) protein is ATP phosphoribosyltransferase.